Reading from the N-terminus, the 423-residue chain is Cyclin-dependent kinase 14 (423 aa).

Phosphoserine occurs at positions 32, 49, and 88. Residues Ser-49–Lys-64 are compositionally biased toward polar residues. Residues Ser-49 to Asp-87 form a disordered region. The Protein kinase domain maps to Tyr-89–Phe-373. ATP contacts are provided by residues Leu-95 to Val-103 and Lys-118. The Proton acceptor role is filled by Asp-210. A disordered region spans residues Glu-403–His-423. The span at Lys-410–His-423 shows a compositional bias: polar residues.

It belongs to the protein kinase superfamily. CMGC Ser/Thr protein kinase family. CDC2/CDKX subfamily. In terms of assembly, found in a complex with LRP6, CCNY and CAPRIN2 during G2/M stage; CAPRIN2 functions as a scaffold for the complex by binding to CCNY via its N terminus and to CDK14 via its C terminus. Interacts with CCNY; CCNY mediates its recruitment to the plasma membrane and promotes phosphorylation of LRP6. Interacts with CCDN3 and CDKN1A. Interacts with SEPT8. Interacts with 14-3-3 proteina YWHAB, YWHAE, YWHAH and YWHAQ.

The protein localises to the cell membrane. It is found in the cytoplasm. It localises to the nucleus. It carries out the reaction L-seryl-[protein] + ATP = O-phospho-L-seryl-[protein] + ADP + H(+). The enzyme catalyses L-threonyl-[protein] + ATP = O-phospho-L-threonyl-[protein] + ADP + H(+). Serine/threonine-protein kinase activity is promoted by associated cyclins CCDN3 and CCNY and repressed by CDKN1A. Its function is as follows. Serine/threonine-protein kinase involved in the control of the eukaryotic cell cycle, whose activity is controlled by an associated cyclin. Acts as a cell-cycle regulator of Wnt signaling pathway during G2/M phase by mediating the phosphorylation of LRP6 at 'Ser-1490', leading to the activation of the Wnt signaling pathway. Acts as a regulator of cell cycle progression and cell proliferation via its interaction with CCDN3. Phosphorylates RB1 in vitro, however the relevance of such result remains to be confirmed in vivo. May also play a role in meiosis, neuron differentiation and may indirectly act as a negative regulator of insulin-responsive glucose transport. This Callithrix jacchus (White-tufted-ear marmoset) protein is Cyclin-dependent kinase 14 (CDK14).